A 342-amino-acid polypeptide reads, in one-letter code: 3-isopropylmalate dehydrogenase (342 aa).

Positions 92, 102, 126, and 216 each coordinate substrate. Mg(2+) is bound by residues Asp-216, Asp-240, and Asp-244. 276 to 288 (GSAPDIAGKGIAD) contacts NAD(+).

It belongs to the isocitrate and isopropylmalate dehydrogenases family. LeuB type 2 subfamily. Homodimer. The cofactor is Mg(2+). It depends on Mn(2+) as a cofactor.

The protein localises to the cytoplasm. It carries out the reaction (2R,3S)-3-isopropylmalate + NAD(+) = 4-methyl-2-oxopentanoate + CO2 + NADH. The protein operates within amino-acid biosynthesis; L-leucine biosynthesis; L-leucine from 3-methyl-2-oxobutanoate: step 3/4. In terms of biological role, catalyzes the oxidation of 3-carboxy-2-hydroxy-4-methylpentanoate (3-isopropylmalate) to 3-carboxy-4-methyl-2-oxopentanoate. The product decarboxylates to 4-methyl-2 oxopentanoate. This Corynebacterium kroppenstedtii (strain DSM 44385 / JCM 11950 / CIP 105744 / CCUG 35717) protein is 3-isopropylmalate dehydrogenase.